A 413-amino-acid chain; its full sequence is Unsaturated 3S-rhamnoglycuronyl hydrolase (413 aa).

The signal sequence occupies residues 1 to 21 (MNHTKLKLSAVALTLALGLSA). Cysteine 22 carries N-palmitoyl cysteine lipidation. Residue cysteine 22 is the site of S-diacylglycerol cysteine attachment. Aspartate 203 acts as the Proton donor in catalysis.

The protein belongs to the glycosyl hydrolase 105 family.

Its subcellular location is the cell membrane. Functionally, glucuronyl hydrolase involved in ulvan degradation. Ulvan is the main polysaccharide component of the Ulvales (green seaweed) cell wall. It is composed of disaccharide building blocks comprising 3-sulfated rhamnose (Rha3S) linked to D-glucuronic acid (GlcA), L-iduronic acid (IduA), or D-xylose (Xyl). Unsaturated 3S-rhamnoglycuronyl hydrolase works together with ulvan lyases to fully degrade the ulvan polymer, catalyzing specifically the cleavage of the unsaturated 4-deoxy-L-threo-hex-4-enopyranosiduronic acid (deltaUA) of the deltaUA-oligosaccharides deltaUA-Rha3S, deltaUA-Rha3S-IduA-Rha3S and deltaUA-Rha3S-Xyl-Rha3S, the end products of the ulvan lyase reaction. This Alteromonas sp. (strain LOR) protein is Unsaturated 3S-rhamnoglycuronyl hydrolase.